The primary structure comprises 570 residues: Serine/threonine-protein kinase flr-4 (570 aa).

Residues 40-331 (YKYIQDLGKG…KLRIQIKKIL (292 aa)) enclose the Protein kinase domain. Residues 46–54 (LGKGRFGTV) and Lys-67 each bind ATP. Asp-172 serves as the catalytic Proton acceptor. Residues 338 to 369 (EEETDISHPISNSNTDSSTAISHNHSNDRKVG) are disordered. Residues 346-361 (PISNSNTDSSTAISHN) show a composition bias toward polar residues. 3 helical membrane-spanning segments follow: residues 400 to 420 (IMQI…FLNI), 425 to 445 (ICYL…FLLI), and 471 to 491 (LIIS…CCMV). The segment at 550–570 (VRRNHDDYYYDESSGPANEEN) is disordered.

This sequence belongs to the protein kinase superfamily. Ser/Thr protein kinase family. As to expression, present in the intestinal cells from comma-stage embryos through the adult stage, although the intestinal expression is weaker after the L1 stage. Accumulates at the cell membrane of intestinal cells, especially the lateral membrane intervening the intestinal cells. Also detected in the muscles of the pharyngeal isthmus from the 3-fold embryonic stage, and in a pair of head neurons, which correspond to the AUA neurons, from the late L1 stage (at protein level).

It is found in the membrane. It catalyses the reaction L-seryl-[protein] + ATP = O-phospho-L-seryl-[protein] + ADP + H(+). It carries out the reaction L-threonyl-[protein] + ATP = O-phospho-L-threonyl-[protein] + ADP + H(+). Its function is as follows. Probable serine-threonine protein kinase involved in the control of defecation rhythms. Required to increase the length of defecation cycle period. Acts in a cell-functional rather than developmental aspect in the regulation of defecation rhythms. Prevents preferential activation of the p38 MAPK pathway in response to the levels of vitamin B12 in different food types during larval development, thereby regulating the expression of cytoprotective genes, modulating life span and stress tolerance. The polypeptide is Serine/threonine-protein kinase flr-4 (flr-4) (Caenorhabditis elegans).